We begin with the raw amino-acid sequence, 359 residues long: Glutamine synthetase (359 aa).

The region spanning 28–107 (VMAEYIWIDG…VLAACYTADG (80 aa)) is the GS beta-grasp domain. One can recognise a GS catalytic domain in the interval 114 to 359 (HRDACAKLLE…GIITETMFEH (246 aa)). A Phosphoserine modification is found at S273. T303 is modified (phosphothreonine). S305 is subject to Phosphoserine.

Belongs to the glutamine synthetase family. Homooctamer.

The protein resides in the cytoplasm. The catalysed reaction is L-glutamate + NH4(+) + ATP = L-glutamine + ADP + phosphate + H(+). This Schizosaccharomyces pombe (strain 972 / ATCC 24843) (Fission yeast) protein is Glutamine synthetase (gln1).